Reading from the N-terminus, the 730-residue chain is Ribosomal RNA large subunit methyltransferase K/L (730 aa).

Positions 46 to 157 (TAYRLCLWSR…RGEAILSLDL (112 aa)) constitute a THUMP domain. The segment covering 399–408 (AAVEEGEPRR) has biased composition (basic and acidic residues). A disordered region spans residues 399–418 (AAVEEGEPRRQAPVASEPAR).

Belongs to the methyltransferase superfamily. RlmKL family.

The protein localises to the cytoplasm. It carries out the reaction guanosine(2445) in 23S rRNA + S-adenosyl-L-methionine = N(2)-methylguanosine(2445) in 23S rRNA + S-adenosyl-L-homocysteine + H(+). It catalyses the reaction guanosine(2069) in 23S rRNA + S-adenosyl-L-methionine = N(2)-methylguanosine(2069) in 23S rRNA + S-adenosyl-L-homocysteine + H(+). Its function is as follows. Specifically methylates the guanine in position 2445 (m2G2445) and the guanine in position 2069 (m7G2069) of 23S rRNA. In Pseudomonas entomophila (strain L48), this protein is Ribosomal RNA large subunit methyltransferase K/L.